The sequence spans 66 residues: Large ribosomal subunit protein uL29 (66 aa).

The protein belongs to the universal ribosomal protein uL29 family.

This Borrelia duttonii (strain Ly) protein is Large ribosomal subunit protein uL29.